The chain runs to 198 residues: Putative pseudouridine methyltransferase (198 aa).

Positions 132 and 186 each coordinate S-adenosyl-L-methionine.

It belongs to the methyltransferase superfamily. TrmY family.

It localises to the cytoplasm. The sequence is that of Putative pseudouridine methyltransferase from Shewanella baltica (strain OS185).